The sequence spans 111 residues: Cytochrome c-550 (111 aa).

4 residues coordinate heme c: C13, C16, H17, and M90.

Binds 1 heme c group covalently per subunit.

This is Cytochrome c-550 from Novispirillum itersonii (Aquaspirillum itersonii).